A 139-amino-acid chain; its full sequence is Chemical-damaging agent resistance protein B (139 aa).

It belongs to the CAPAB/TerDEXZ family.

Functionally, not known; could confer methyl methane sulfonate (MMS), mitomycin C (MC), and UV resistance. In Clostridium acetobutylicum, this protein is Chemical-damaging agent resistance protein B.